The chain runs to 368 residues: uncharacterized protein (368 aa).

Belongs to the Gfo/Idh/MocA family.

This is an uncharacterized protein from Schizosaccharomyces pombe (strain 972 / ATCC 24843) (Fission yeast).